The chain runs to 141 residues: Large ribosomal subunit protein uL11 (141 aa).

The protein belongs to the universal ribosomal protein uL11 family. As to quaternary structure, part of the ribosomal stalk of the 50S ribosomal subunit. Interacts with L10 and the large rRNA to form the base of the stalk. L10 forms an elongated spine to which L12 dimers bind in a sequential fashion forming a multimeric L10(L12)X complex. In terms of processing, one or more lysine residues are methylated.

Forms part of the ribosomal stalk which helps the ribosome interact with GTP-bound translation factors. The sequence is that of Large ribosomal subunit protein uL11 from Streptococcus gordonii (strain Challis / ATCC 35105 / BCRC 15272 / CH1 / DL1 / V288).